We begin with the raw amino-acid sequence, 760 residues long: UDP-N-acetylmuramoyl-L-alanyl-D-glutamate--2,6-diaminopimelate ligase MurE homolog, chloroplastic (760 aa).

The transit peptide at 1 to 59 (MATAPLAFRLPFPFSFPSASRPPPSRILAPPTPRRLPLRLAAAAARRFRPPTADDEPPE) directs the protein to the chloroplast. Disordered regions lie at residues 13 to 159 (PFSF…TDEL) and 176 to 205 (LSVV…DEDG). A compositionally biased stretch (pro residues) spans 20-34 (SRPPPSRILAPPTPR). Residues 53–62 (ADDEPPEAAE) are compositionally biased toward acidic residues. Positions 118–132 (EIDRAIAEKREEFTR) are enriched in basic and acidic residues. 2 stretches are compositionally biased toward acidic residues: residues 150 to 159 (PEDEDLTDEL) and 182 to 205 (ADEE…DEDG).

This sequence belongs to the MurCDEF family. MurE subfamily. As to quaternary structure, component of the plastid-encoded plastid RNA polymerase (PEP) complex.

The protein resides in the plastid. It localises to the chloroplast. In terms of biological role, required for the activity of the plastid-encoded RNA polymerase (PEP) and full expression of genes transcribed by PEP. Required for the proper build-up and formation of the PEP-complex. The polypeptide is UDP-N-acetylmuramoyl-L-alanyl-D-glutamate--2,6-diaminopimelate ligase MurE homolog, chloroplastic (Zea mays (Maize)).